A 552-amino-acid chain; its full sequence is Berberine bridge enzyme-like 6 (552 aa).

The N-terminal stretch at 1 to 16 (MKEAFVFLLCLTNKFP) is a signal peptide. The cysteines at positions 56 and 119 are disulfide-linked. Residues N76, N161, N280, N364, N419, and N463 are each glycosylated (N-linked (GlcNAc...) asparagine). Residues 93-270 (FSSPNFKKLL…LSWKINLVEV (178 aa)) form the FAD-binding PCMH-type domain. Residues 134–196 (HDNEGFSYMS…QTLAFPAGVC (63 aa)) constitute a cross-link (6-(S-cysteinyl)-8alpha-(pros-histidyl)-FAD (His-Cys)).

The protein belongs to the oxygen-dependent FAD-linked oxidoreductase family. The cofactor is FAD. Post-translationally, the FAD cofactor is bound via a bicovalent 6-S-cysteinyl, 8alpha-N1-histidyl FAD linkage.

Its subcellular location is the secreted. The protein localises to the cell wall. In terms of biological role, probable flavin-dependent oxidoreductase. This Arabidopsis thaliana (Mouse-ear cress) protein is Berberine bridge enzyme-like 6.